Reading from the N-terminus, the 399-residue chain is Elongation factor Tu (399 aa).

One can recognise a tr-type G domain in the interval 10 to 209 (KPHVNIGTIG…AVDEYIPTPE (200 aa)). Residues 19–26 (GHVDHGKT) form a G1 region. 19–26 (GHVDHGKT) serves as a coordination point for GTP. Thr-26 contacts Mg(2+). The G2 stretch occupies residues 60-64 (GITIA). The segment at 81 to 84 (DCPG) is G3. GTP is bound by residues 81-85 (DCPGH) and 136-139 (NKED). Residues 136–139 (NKED) are G4. The segment at 174-176 (SAL) is G5.

This sequence belongs to the TRAFAC class translation factor GTPase superfamily. Classic translation factor GTPase family. EF-Tu/EF-1A subfamily. In terms of assembly, monomer.

It is found in the cytoplasm. It catalyses the reaction GTP + H2O = GDP + phosphate + H(+). In terms of biological role, GTP hydrolase that promotes the GTP-dependent binding of aminoacyl-tRNA to the A-site of ribosomes during protein biosynthesis. The polypeptide is Elongation factor Tu (Nitratiruptor sp. (strain SB155-2)).